The sequence spans 260 residues: PHD finger protein ALFIN-LIKE 5 (260 aa).

M1 bears the N-acetylmethionine mark. A disordered region spans residues 142 to 203 (AEKQTKEMPS…EEDEDEDEHG (62 aa)). Residues 148-165 (EMPSSANQNGNRSKSNSK) show a composition bias toward polar residues. A compositionally biased stretch (basic and acidic residues) spans 167-181 (RGLESKSSKTIHAKD). Positions 182–202 (EEEGLELEEGEEEEDEDEDEH) are enriched in acidic residues. The segment at 204–256 (ETLCGACGDNYASDEFWICCDMCEKWFHGECVKITPARAEHIKHYKCPTCSNK) adopts a PHD-type zinc-finger fold.

Belongs to the Alfin family. In terms of assembly, interacts with H3K4me3 and to a lesser extent with H3K4me2. In terms of tissue distribution, ubiquitously expressed.

The protein localises to the nucleus. Functionally, histone-binding component that specifically recognizes H3 tails trimethylated on 'Lys-4' (H3K4me3), which mark transcription start sites of virtually all active genes. The chain is PHD finger protein ALFIN-LIKE 5 (AL5) from Arabidopsis thaliana (Mouse-ear cress).